A 338-amino-acid polypeptide reads, in one-letter code: Decarboxylase macB (338 aa).

Zn(2+)-binding residues include H7, H9, H159, and D283.

This sequence belongs to the metallo-dependent hydrolases superfamily. ACMSD family.

It catalyses the reaction 6-methylsalicylate + H(+) = 3-methylphenol + CO2. It functions in the pathway secondary metabolite biosynthesis; terpenoid biosynthesis. Its function is as follows. Decarboxylase; part of the gene cluster that mediates the biosynthesis of macrophorins, isoprenoid epoxycyclohexenones containing cyclized drimane moieties. The first step of the pathway is the synthesis of 6-methylsalicylic acid (6-MSA) by the polyketide synthase macA. 6-MSA is then converted to m-cresol by the decarboxylase macB. The cytochrome P450 monooxygenase macC then catalyzes the oxidation of m-cresol to toluquinol. Epoxidation of toluquinol is then performed by the short chain dehydrogenase macD, with the help of macE, and a further prenylation by macG leads to 7-deacetoxyyanuthone A. The next step is the hydroxylation of C-22 of 7-deacetoxyyanuthone A by the cytochrome P450 monooxygenase macH to yield 22-deacetylyanuthone A. O-Mevalon transferase macI then attaches mevalon to the hydroxyl group of 22-deacetylyanuthone A to produce yanuthone E. The terpene cyclase macJ catalyzes the cyclization of 22-deacetylyanuthone A to macrophorin A. MacJ is also able to catalyze cyclization of yanuthone E and 7-deacetoxyyanuthone A to their corresponding macrophorins. The macJ products can be further modified by macH and macJ, as well as by the FAD-dependent monooxygenase macF, to produce additional macrophorins, including 4'-oxomacrophorin A, 4'-oxomacrophorin D and 4'-oxomacrophorin E. The sequence is that of Decarboxylase macB from Penicillium terrestre.